Consider the following 431-residue polypeptide: Glutamate-1-semialdehyde 2,1-aminomutase (431 aa).

The residue at position 265 (Lys-265) is an N6-(pyridoxal phosphate)lysine.

Belongs to the class-III pyridoxal-phosphate-dependent aminotransferase family. HemL subfamily. As to quaternary structure, homodimer. Requires pyridoxal 5'-phosphate as cofactor.

It localises to the cytoplasm. It catalyses the reaction (S)-4-amino-5-oxopentanoate = 5-aminolevulinate. Its pathway is porphyrin-containing compound metabolism; protoporphyrin-IX biosynthesis; 5-aminolevulinate from L-glutamyl-tRNA(Glu): step 2/2. The protein is Glutamate-1-semialdehyde 2,1-aminomutase of Vibrio campbellii (strain ATCC BAA-1116).